The chain runs to 252 residues: tRNA (guanine-N(1)-)-methyltransferase (252 aa).

S-adenosyl-L-methionine is bound by residues Gly-113 and 133–138 (LGDYVL).

This sequence belongs to the RNA methyltransferase TrmD family. As to quaternary structure, homodimer.

It localises to the cytoplasm. The catalysed reaction is guanosine(37) in tRNA + S-adenosyl-L-methionine = N(1)-methylguanosine(37) in tRNA + S-adenosyl-L-homocysteine + H(+). In terms of biological role, specifically methylates guanosine-37 in various tRNAs. This Stenotrophomonas maltophilia (strain K279a) protein is tRNA (guanine-N(1)-)-methyltransferase.